The chain runs to 28 residues: Cysteine-rich venom protein asurin-2 (28 aa).

Over residues 1–15 the composition is skewed to basic and acidic residues; that stretch reads SNKKDYRKEIVDKHN. The tract at residues 1-28 is disordered; the sequence is SNKKDYRKEIVDKHNALSRSVKPTASNM. Residues 17–28 show a composition bias toward polar residues; that stretch reads LSRSVKPTASNM.

This sequence belongs to the CRISP family. Contains 8 disulfide bonds. In terms of tissue distribution, expressed by the venom gland.

It localises to the secreted. Functionally, blocks contraction of smooth muscle elicited by high potassium-induced depolarization, but does not block caffeine-stimulated contraction. May target voltage-gated calcium channels on smooth muscle. The polypeptide is Cysteine-rich venom protein asurin-2 (Austrelaps superbus (Lowland copperhead snake)).